We begin with the raw amino-acid sequence, 337 residues long: Putative F-box protein At4g09870 (337 aa).

The region spanning M1–L46 is the F-box domain.

This Arabidopsis thaliana (Mouse-ear cress) protein is Putative F-box protein At4g09870.